Here is a 232-residue protein sequence, read N- to C-terminus: Uracil phosphoribosyltransferase (232 aa).

Residue 38–42 (KGLVK) participates in GTP binding. Residues arginine 87, arginine 112, and 140-148 (DPMIATGST) contribute to the 5-phospho-alpha-D-ribose 1-diphosphate site. Uracil contacts are provided by residues isoleucine 204 and 209 to 211 (GDA). Aspartate 210 is a binding site for 5-phospho-alpha-D-ribose 1-diphosphate.

Belongs to the UPRTase family. Requires Mg(2+) as cofactor.

The enzyme catalyses UMP + diphosphate = 5-phospho-alpha-D-ribose 1-diphosphate + uracil. It participates in pyrimidine metabolism; UMP biosynthesis via salvage pathway; UMP from uracil: step 1/1. Allosterically activated by GTP. In terms of biological role, catalyzes the conversion of uracil and 5-phospho-alpha-D-ribose 1-diphosphate (PRPP) to UMP and diphosphate. The chain is Uracil phosphoribosyltransferase from Pyrococcus furiosus (strain ATCC 43587 / DSM 3638 / JCM 8422 / Vc1).